The following is a 445-amino-acid chain: 3-phosphoshikimate 1-carboxyvinyltransferase (445 aa).

The segment at 1 to 24 (MEHAATLPQTSRRPATPLTGTITV) is disordered. Polar residues predominate over residues 7–22 (LPQTSRRPATPLTGTI). Lys28, Ser29, and Arg33 together coordinate 3-phosphoshikimate. Lys28 contributes to the phosphoenolpyruvate binding site. Phosphoenolpyruvate-binding residues include Gly101 and Arg129. 4 residues coordinate 3-phosphoshikimate: Ser174, Gln176, Asp326, and Lys353. A phosphoenolpyruvate-binding site is contributed by Gln176. The active-site Proton acceptor is Asp326. The phosphoenolpyruvate site is built by Arg357 and Arg399.

Belongs to the EPSP synthase family. Monomer.

Its subcellular location is the cytoplasm. It carries out the reaction 3-phosphoshikimate + phosphoenolpyruvate = 5-O-(1-carboxyvinyl)-3-phosphoshikimate + phosphate. The protein operates within metabolic intermediate biosynthesis; chorismate biosynthesis; chorismate from D-erythrose 4-phosphate and phosphoenolpyruvate: step 6/7. Its function is as follows. Catalyzes the transfer of the enolpyruvyl moiety of phosphoenolpyruvate (PEP) to the 5-hydroxyl of shikimate-3-phosphate (S3P) to produce enolpyruvyl shikimate-3-phosphate and inorganic phosphate. The chain is 3-phosphoshikimate 1-carboxyvinyltransferase from Acidiphilium cryptum (strain JF-5).